A 280-amino-acid polypeptide reads, in one-letter code: F-box/SPRY domain-containing protein 1 (280 aa).

A disordered region spans residues 1-28; the sequence is MAAAINAAVPSPPVAPSAPPPPPPPLGQ. A compositionally biased stretch (pro residues) spans 10-26; that stretch reads PSPPVAPSAPPPPPPPL. The region spanning 27 to 76 is the F-box domain; that stretch reads GQASDRFPSLVLELVFSYLDLPDLRSCGLVCKRWYRCLHGDKNSDVWRSL. Residues 86–278 form the B30.2/SPRY domain; the sequence is LRTDILCNLR…VTLVYLGKPL (193 aa).

Belongs to the FBXO45/Fsn family. Probable component of a E3 ubiquitin ligase complex.

Its pathway is protein modification; protein ubiquitination. In Xenopus laevis (African clawed frog), this protein is F-box/SPRY domain-containing protein 1 (fbxo45).